The chain runs to 215 residues: Pyridoxine/pyridoxamine 5'-phosphate oxidase (215 aa).

Substrate contacts are provided by residues 9 to 12 (RRDY) and Lys69. FMN-binding positions include 64–69 (RVLLLK), 79–80 (FT), Lys86, and Gln108. Tyr126, Arg130, and Ser134 together coordinate substrate. Residues 143–144 (QS) and Trp188 each bind FMN. 194-196 (RLH) is a substrate binding site. Arg198 contacts FMN.

This sequence belongs to the pyridoxamine 5'-phosphate oxidase family. Homodimer. Requires FMN as cofactor.

It carries out the reaction pyridoxamine 5'-phosphate + O2 + H2O = pyridoxal 5'-phosphate + H2O2 + NH4(+). The catalysed reaction is pyridoxine 5'-phosphate + O2 = pyridoxal 5'-phosphate + H2O2. It participates in cofactor metabolism; pyridoxal 5'-phosphate salvage; pyridoxal 5'-phosphate from pyridoxamine 5'-phosphate: step 1/1. It functions in the pathway cofactor metabolism; pyridoxal 5'-phosphate salvage; pyridoxal 5'-phosphate from pyridoxine 5'-phosphate: step 1/1. Catalyzes the oxidation of either pyridoxine 5'-phosphate (PNP) or pyridoxamine 5'-phosphate (PMP) into pyridoxal 5'-phosphate (PLP). This Pseudomonas savastanoi pv. phaseolicola (strain 1448A / Race 6) (Pseudomonas syringae pv. phaseolicola (strain 1448A / Race 6)) protein is Pyridoxine/pyridoxamine 5'-phosphate oxidase.